A 525-amino-acid polypeptide reads, in one-letter code: Chromaffin granule amine transporter (525 aa).

Residues 1–21 (MLRTILDAPQRLLKEGRASRQ) are Cytoplasmic-facing. Residues 22–42 (LVLVVVFVALLLDNMLFTVVV) form a helical membrane-spanning segment. Topologically, residues 43-138 (PIVPTFLYDM…TGFLEEEITR (96 aa)) are lumenal, vesicle. Residues asparagine 58, asparagine 87, and asparagine 104 are each glycosylated (N-linked (GlcNAc...) asparagine). Residues 139–158 (VGVLFASKAVMQLLVNPFVG) form a helical membrane-spanning segment. Over 159 to 167 (PLTNRIGYH) the chain is Cytoplasmic. Residues 168–188 (IPMFAGFVIMFLSTVMFAFSG) traverse the membrane as a helical segment. Residues 189–197 (TYTLLFVAR) lie on the Lumenal, vesicle side of the membrane. Residues 198–218 (TLQGIGSSFSSVAGLGMLASV) traverse the membrane as a helical segment. Topologically, residues 219–227 (YTDDHERGR) are cytoplasmic. The helical transmembrane segment at 228-250 (AMGTALGGLALGLLVGAPFGSVM) threads the bilayer. Residues 251–256 (YEFVGK) are Lumenal, vesicle-facing. A helical membrane pass occupies residues 257–279 (SAPFLILAFLALLDGALQLCILQ). Residues 280 to 299 (PSKVSPESAKGTPLFMLLKD) are Cytoplasmic-facing. A helical membrane pass occupies residues 300–319 (PYILVAAGSICFANMGVAIL). The Lumenal, vesicle segment spans residues 320–335 (EPTLPIWMMQTMCSPK). A helical transmembrane segment spans residues 336–360 (WQLGLAFLPASVSYLIGTNLFGVLA). Over 361 to 365 (NKMGR) the chain is Cytoplasmic. Residues 366 to 386 (WLCSLIGMLVVGTSLLCVPLA) form a helical membrane-spanning segment. Residues 387 to 397 (HNIFGLIGPNA) lie on the Lumenal, vesicle side of the membrane. The chain crosses the membrane as a helical span at residues 398–418 (GLGLAIGMVDSSMMPIMGHLV). The Cytoplasmic portion of the chain corresponds to 419-422 (DLRH). A helical transmembrane segment spans residues 423-443 (TSVYGSVYAIADVAFCMGFAI). Topologically, residues 444–448 (GPSTG) are lumenal, vesicle. Residues 449-470 (GAIVKAIGFPWLMVITGVINIV) form a helical membrane-spanning segment. At 471–525 (YAPLCYYLRSPPAKEEKLAILSQDCPMETRMYATQKPTKEFPLGEDSDEEPDHEE) the chain is on the cytoplasmic side. A disordered region spans residues 503-525 (ATQKPTKEFPLGEDSDEEPDHEE). Acidic residues predominate over residues 513-525 (LGEDSDEEPDHEE).

It belongs to the major facilitator superfamily. Vesicular transporter family. As to expression, expressed primarily in neuroendocrine tissues. Highly expressed in chromaffin cells of the adrenal medulla (at protein level). Detected in peripheral sympathetic ganglia (at protein level). Found in some paracrine cells in stomach and duodenum (at protein level). Expressed in substantia nigra. In terms of tissue distribution, expressed in gastrointestinal tract.

Its subcellular location is the cytoplasmic vesicle. It is found in the secretory vesicle membrane. The protein localises to the secretory vesicle. The protein resides in the synaptic vesicle membrane. It localises to the endoplasmic reticulum membrane. The catalysed reaction is serotonin(in) + 2 H(+)(out) = serotonin(out) + 2 H(+)(in). It catalyses the reaction (R)-noradrenaline(in) + 2 H(+)(out) = (R)-noradrenaline(out) + 2 H(+)(in). The enzyme catalyses dopamine(in) + 2 H(+)(out) = dopamine(out) + 2 H(+)(in). Strongly inhibited by reserpine. Also inhibited to a lesser extent by ketanserin and fenfluramine. Not significantly inhibited by tetrabenazine. Its function is as follows. Electrogenic antiporter that exchanges one cationic monoamine with two intravesicular protons across the membrane of secretory and synaptic vesicles. Uses the electrochemical proton gradient established by the V-type proton-pump ATPase to accumulate high concentrations of monoamines inside the vesicles prior to their release via exocytosis. Transports catecholamines and indolamines with higher affinity for serotonin. Regulates the transvesicular monoaminergic gradient that determines the quantal size. Mediates presynaptic monoaminergic vesicle transport in the amygdala and prefrontal brain regions related with emotion processing in response to environmental stimuli. In terms of biological role, unable to uptake serotonin. The polypeptide is Chromaffin granule amine transporter (SLC18A1) (Homo sapiens (Human)).